The primary structure comprises 142 residues: Large ribosomal subunit protein uL11 (142 aa).

It belongs to the universal ribosomal protein uL11 family. In terms of assembly, part of the ribosomal stalk of the 50S ribosomal subunit. Interacts with L10 and the large rRNA to form the base of the stalk. L10 forms an elongated spine to which L12 dimers bind in a sequential fashion forming a multimeric L10(L12)X complex. Post-translationally, one or more lysine residues are methylated.

Forms part of the ribosomal stalk which helps the ribosome interact with GTP-bound translation factors. The sequence is that of Large ribosomal subunit protein uL11 from Pectobacterium atrosepticum (strain SCRI 1043 / ATCC BAA-672) (Erwinia carotovora subsp. atroseptica).